We begin with the raw amino-acid sequence, 95 residues long: Aspartyl/glutamyl-tRNA(Asn/Gln) amidotransferase subunit C (95 aa).

This sequence belongs to the GatC family. Heterotrimer of A, B and C subunits.

The enzyme catalyses L-glutamyl-tRNA(Gln) + L-glutamine + ATP + H2O = L-glutaminyl-tRNA(Gln) + L-glutamate + ADP + phosphate + H(+). It carries out the reaction L-aspartyl-tRNA(Asn) + L-glutamine + ATP + H2O = L-asparaginyl-tRNA(Asn) + L-glutamate + ADP + phosphate + 2 H(+). Its function is as follows. Allows the formation of correctly charged Asn-tRNA(Asn) or Gln-tRNA(Gln) through the transamidation of misacylated Asp-tRNA(Asn) or Glu-tRNA(Gln) in organisms which lack either or both of asparaginyl-tRNA or glutaminyl-tRNA synthetases. The reaction takes place in the presence of glutamine and ATP through an activated phospho-Asp-tRNA(Asn) or phospho-Glu-tRNA(Gln). In Brucella anthropi (strain ATCC 49188 / DSM 6882 / CCUG 24695 / JCM 21032 / LMG 3331 / NBRC 15819 / NCTC 12168 / Alc 37) (Ochrobactrum anthropi), this protein is Aspartyl/glutamyl-tRNA(Asn/Gln) amidotransferase subunit C.